Consider the following 545-residue polypeptide: Chaperonin GroEL (545 aa).

ATP contacts are provided by residues 29 to 32 (TLGP), 86 to 90 (DGTTT), glycine 413, 476 to 478 (NAA), and aspartate 492.

The protein belongs to the chaperonin (HSP60) family. As to quaternary structure, forms a cylinder of 14 subunits composed of two heptameric rings stacked back-to-back. Interacts with the co-chaperonin GroES.

It localises to the cytoplasm. The enzyme catalyses ATP + H2O + a folded polypeptide = ADP + phosphate + an unfolded polypeptide.. Functionally, together with its co-chaperonin GroES, plays an essential role in assisting protein folding. The GroEL-GroES system forms a nano-cage that allows encapsulation of the non-native substrate proteins and provides a physical environment optimized to promote and accelerate protein folding. This chain is Chaperonin GroEL, found in Oceanobacillus iheyensis (strain DSM 14371 / CIP 107618 / JCM 11309 / KCTC 3954 / HTE831).